A 227-amino-acid polypeptide reads, in one-letter code: Cytidylate kinase (227 aa).

12–20 lines the ATP pocket; that stretch reads GPSGAGKGT.

Belongs to the cytidylate kinase family. Type 1 subfamily.

The protein localises to the cytoplasm. The enzyme catalyses CMP + ATP = CDP + ADP. The catalysed reaction is dCMP + ATP = dCDP + ADP. The polypeptide is Cytidylate kinase (Citrobacter koseri (strain ATCC BAA-895 / CDC 4225-83 / SGSC4696)).